A 525-amino-acid chain; its full sequence is tRNA(Ile)-lysidine synthase (525 aa).

32 to 37 (SGGRDS) provides a ligand contact to ATP.

It belongs to the tRNA(Ile)-lysidine synthase family.

It localises to the cytoplasm. The enzyme catalyses cytidine(34) in tRNA(Ile2) + L-lysine + ATP = lysidine(34) in tRNA(Ile2) + AMP + diphosphate + H(+). In terms of biological role, ligates lysine onto the cytidine present at position 34 of the AUA codon-specific tRNA(Ile) that contains the anticodon CAU, in an ATP-dependent manner. Cytidine is converted to lysidine, thus changing the amino acid specificity of the tRNA from methionine to isoleucine. The sequence is that of tRNA(Ile)-lysidine synthase from Psychrobacter sp. (strain PRwf-1).